We begin with the raw amino-acid sequence, 137 residues long: Large ribosomal subunit protein uL16 (137 aa).

The protein belongs to the universal ribosomal protein uL16 family. Part of the 50S ribosomal subunit.

Its function is as follows. Binds 23S rRNA and is also seen to make contacts with the A and possibly P site tRNAs. The sequence is that of Large ribosomal subunit protein uL16 from Rhodopseudomonas palustris (strain ATCC BAA-98 / CGA009).